Reading from the N-terminus, the 205-residue chain is Large ribosomal subunit protein uL4 (205 aa).

Belongs to the universal ribosomal protein uL4 family. Part of the 50S ribosomal subunit.

One of the primary rRNA binding proteins, this protein initially binds near the 5'-end of the 23S rRNA. It is important during the early stages of 50S assembly. It makes multiple contacts with different domains of the 23S rRNA in the assembled 50S subunit and ribosome. In terms of biological role, forms part of the polypeptide exit tunnel. In Roseobacter denitrificans (strain ATCC 33942 / OCh 114) (Erythrobacter sp. (strain OCh 114)), this protein is Large ribosomal subunit protein uL4.